We begin with the raw amino-acid sequence, 101 residues long: Small ribosomal subunit protein uS14 (101 aa).

The protein belongs to the universal ribosomal protein uS14 family. As to quaternary structure, part of the 30S ribosomal subunit. Contacts proteins S3 and S10.

In terms of biological role, binds 16S rRNA, required for the assembly of 30S particles and may also be responsible for determining the conformation of the 16S rRNA at the A site. This Pseudoalteromonas atlantica (strain T6c / ATCC BAA-1087) protein is Small ribosomal subunit protein uS14.